A 377-amino-acid polypeptide reads, in one-letter code: Succinyl-diaminopimelate desuccinylase (377 aa).

His-66 is a Zn(2+) binding site. Residue Asp-68 is part of the active site. Residue Asp-99 coordinates Zn(2+). Residue Glu-133 is the Proton acceptor of the active site. The Zn(2+) site is built by Glu-134, Glu-163, and His-349.

The protein belongs to the peptidase M20A family. DapE subfamily. As to quaternary structure, homodimer. It depends on Zn(2+) as a cofactor. Co(2+) serves as cofactor.

The catalysed reaction is N-succinyl-(2S,6S)-2,6-diaminopimelate + H2O = (2S,6S)-2,6-diaminopimelate + succinate. It participates in amino-acid biosynthesis; L-lysine biosynthesis via DAP pathway; LL-2,6-diaminopimelate from (S)-tetrahydrodipicolinate (succinylase route): step 3/3. In terms of biological role, catalyzes the hydrolysis of N-succinyl-L,L-diaminopimelic acid (SDAP), forming succinate and LL-2,6-diaminopimelate (DAP), an intermediate involved in the bacterial biosynthesis of lysine and meso-diaminopimelic acid, an essential component of bacterial cell walls. The polypeptide is Succinyl-diaminopimelate desuccinylase (Legionella pneumophila (strain Lens)).